A 691-amino-acid chain; its full sequence is MTDPIAPLTSKDINTAKSAANEDAIVAQMRTFIDALKKHNYAYYVLDNPILEDSEYDQLRRSLLELEEEYPDLIQPDSPINQVGDMPLSAFTQVTHDIPMLSLGNVFEYDDLRDFMRRVNDRLSVAQQSPEYEMELKLDGLAVSLKYAYGKFVQAVTRGDGQTGEDITQNAKTIRNLPLWIPAASDIELLEVRGEVLMPKAGFERLNRLAEEKGDKTFANPRNAAAGSLRQLDPAIAASRPLAFYCYSVNQGLPEHIKTQSAALAWLKTIGFTVSAVEVVQNPREAQAYYESVKETRGDLPFEIDGMVIKVNSLALQQQLGFLSREPRWATAYKFPAETVMTRLHAIEWQVGRTGAITPVGKLEPVKVGGVTVSNVTLHNFGEIQRLDVRAGDMVSVHRAGDVIPKVTRVWTDQRPENSEPVKLPSTCPVCDSPVVLPKDEALARCTGGLFCPAQQVEALIHFVSRRAMDIDGLGASWLISFFEHGLVKTVADIYQLHNHQEELITLEKLGEKSVQNILSAIEASKQTTLARFIYALGIRGVGETTAQNLAQQFGDLDALMSASIEKLLLTPDVGAITAELTYKFFRAPHNIEVINALREAGVHWDKVEQVASEGLPLDGQTWVITGALDSMARDEAKAKLQALGAKVSGSISAKTTALLAGDKAGSKMAKAEKLGVKVVGEEEFLVLVGE.

Residues 53 to 57 (DSEYD), 102 to 103 (SL), and E135 each bind NAD(+). The active-site N6-AMP-lysine intermediate is the K137. Residues R158, E195, K310, and K334 each contribute to the NAD(+) site. Residues C428, C431, C446, and C452 each contribute to the Zn(2+) site. Residues 613–691 (SEGLPLDGQT…EEEFLVLVGE (79 aa)) form the BRCT domain.

This sequence belongs to the NAD-dependent DNA ligase family. LigA subfamily. The cofactor is Mg(2+). Requires Mn(2+) as cofactor.

It carries out the reaction NAD(+) + (deoxyribonucleotide)n-3'-hydroxyl + 5'-phospho-(deoxyribonucleotide)m = (deoxyribonucleotide)n+m + AMP + beta-nicotinamide D-nucleotide.. Functionally, DNA ligase that catalyzes the formation of phosphodiester linkages between 5'-phosphoryl and 3'-hydroxyl groups in double-stranded DNA using NAD as a coenzyme and as the energy source for the reaction. It is essential for DNA replication and repair of damaged DNA. This chain is DNA ligase, found in Psychrobacter cryohalolentis (strain ATCC BAA-1226 / DSM 17306 / VKM B-2378 / K5).